The chain runs to 126 residues: Phosphoribosyl-AMP cyclohydrolase (126 aa).

Aspartate 77 contributes to the Mg(2+) binding site. Cysteine 78 is a binding site for Zn(2+). The Mg(2+) site is built by aspartate 79 and aspartate 81. Residues cysteine 95 and cysteine 102 each coordinate Zn(2+).

The protein belongs to the PRA-CH family. Homodimer. The cofactor is Mg(2+). Zn(2+) serves as cofactor.

Its subcellular location is the cytoplasm. It carries out the reaction 1-(5-phospho-beta-D-ribosyl)-5'-AMP + H2O = 1-(5-phospho-beta-D-ribosyl)-5-[(5-phospho-beta-D-ribosylamino)methylideneamino]imidazole-4-carboxamide. Its pathway is amino-acid biosynthesis; L-histidine biosynthesis; L-histidine from 5-phospho-alpha-D-ribose 1-diphosphate: step 3/9. Functionally, catalyzes the hydrolysis of the adenine ring of phosphoribosyl-AMP. The protein is Phosphoribosyl-AMP cyclohydrolase of Cellvibrio japonicus (strain Ueda107) (Pseudomonas fluorescens subsp. cellulosa).